Reading from the N-terminus, the 206-residue chain is Ribonuclease HII (206 aa).

Residues 18 to 206 (GRVAGVDEVG…PVREWLEANS (189 aa)) enclose the RNase H type-2 domain. Residues Asp24, Glu25, and Asp116 each contribute to the a divalent metal cation site.

This sequence belongs to the RNase HII family. Mn(2+) serves as cofactor. It depends on Mg(2+) as a cofactor.

The protein resides in the cytoplasm. The catalysed reaction is Endonucleolytic cleavage to 5'-phosphomonoester.. In terms of biological role, endonuclease that specifically degrades the RNA of RNA-DNA hybrids. The sequence is that of Ribonuclease HII from Shewanella amazonensis (strain ATCC BAA-1098 / SB2B).